We begin with the raw amino-acid sequence, 487 residues long: Fibroblast growth factor receptor-like 1 (487 aa).

A signal peptide spans 1–18 (MGLQLALLLAGIVALSDS). The Extracellular segment spans residues 19–371 (ARGPPRIADK…PSSVSSLPWP (353 aa)). Residues 23–109 (PRIADKVIHR…GSTNVNYTLI (87 aa)) form the Ig-like C2-type 1 domain. The cysteines at positions 45 and 93 are disulfide-linked. N-linked (GlcNAc...) asparagine glycosylation occurs at Asn105. Residues 115-125 (SSGKNSQTPEG) show a composition bias toward polar residues. The segment at 115–147 (SSGKNSQTPEGSNGEYEDHSGKQWAQPRFTQPA) is disordered. Ig-like C2-type domains follow at residues 141 to 231 (PRFT…YKVE) and 240 to 348 (PILT…AFLT). A disulfide bond links Cys166 and Cys215. Residues Asn225, Asn249, and Asn287 are each glycosylated (N-linked (GlcNAc...) asparagine). Cys262 and Cys332 are joined by a disulfide. The helical transmembrane segment at 372 to 392 (VIIGIPAGAVFIFGTILLWLC) threads the bilayer. At 393–487 (QTKKKPCSPP…HQHQHIQYQC (95 aa)) the chain is on the cytoplasmic side.

In terms of assembly, interacts with heparin and FGF2. Expressed in cartilaginous structures.

It is found in the cell membrane. Its function is as follows. Has a negative effect on cell proliferation. The polypeptide is Fibroblast growth factor receptor-like 1 (FGFRL1) (Gallus gallus (Chicken)).